The chain runs to 250 residues: MRIALTNDDGIQAPGLRAIYKALIEAGHTVDVVAPVTEQSAVGHAVTIAMPLRVKVFHENGFRGHGVYGTPTDCMKLGLSSLLEHKPELVVSGINAGANVGPDILYSGTVSAATEAAHMGYRAVALSYDSFRPEDISAHARHAAALLPHIEWAGLPERCVVNINYPAVPVESIKGVRVCPQTRAVWHDWYEHRTDPRGGSYWWLNGVIPPETVAPGTDRALLTEGYITVTPLRFDFTDSETLTRLASLEE.

Positions 8, 9, 40, and 95 each coordinate a divalent metal cation.

Belongs to the SurE nucleotidase family. The cofactor is a divalent metal cation.

Its subcellular location is the cytoplasm. The enzyme catalyses a ribonucleoside 5'-phosphate + H2O = a ribonucleoside + phosphate. Its function is as follows. Nucleotidase that shows phosphatase activity on nucleoside 5'-monophosphates. The polypeptide is 5'-nucleotidase SurE (Nitratidesulfovibrio vulgaris (strain ATCC 29579 / DSM 644 / CCUG 34227 / NCIMB 8303 / VKM B-1760 / Hildenborough) (Desulfovibrio vulgaris)).